Consider the following 504-residue polypeptide: Anaerobic nitric oxide reductase transcription regulator NorR (504 aa).

Asp57 is modified (4-aspartylphosphate). Positions 187–416 (MIGLSPGMTQ…LEHAIHRAVV (230 aa)) constitute a Sigma-54 factor interaction domain. ATP-binding positions include 215–222 (GETGTGKE) and 278–287 (ADNGTLFLDE). The H-T-H motif DNA-binding region spans 479–498 (WAACARMLETDVANLHRLAK).

It functions in the pathway nitrogen metabolism; nitric oxide reduction. In terms of biological role, required for the expression of anaerobic nitric oxide (NO) reductase, acts as a transcriptional activator for at least the norVW operon. Activation also requires sigma-54. This chain is Anaerobic nitric oxide reductase transcription regulator NorR, found in Escherichia coli O81 (strain ED1a).